The chain runs to 176 residues: 3-hydroxyanthranilate 3,4-dioxygenase (176 aa).

O2 is bound at residue Arg-44. Residues His-48, Glu-54, and His-92 each coordinate Fe cation. Glu-54 contributes to the substrate binding site. Positions 96 and 106 each coordinate substrate. Fe cation is bound by residues Cys-121, Cys-124, Cys-158, and Cys-161.

The protein belongs to the 3-HAO family. In terms of assembly, homodimer. Fe(2+) is required as a cofactor.

It carries out the reaction 3-hydroxyanthranilate + O2 = (2Z,4Z)-2-amino-3-carboxymuconate 6-semialdehyde. It participates in cofactor biosynthesis; NAD(+) biosynthesis; quinolinate from L-kynurenine: step 3/3. In terms of biological role, catalyzes the oxidative ring opening of 3-hydroxyanthranilate to 2-amino-3-carboxymuconate semialdehyde, which spontaneously cyclizes to quinolinate. The chain is 3-hydroxyanthranilate 3,4-dioxygenase from Xanthomonas campestris pv. campestris (strain 8004).